A 217-amino-acid polypeptide reads, in one-letter code: 3,4-dihydroxy-2-butanone 4-phosphate synthase (217 aa).

D-ribulose 5-phosphate contacts are provided by residues 37–38 (RE), aspartate 42, 150–154 (RRGHT), and glutamate 174. Residue glutamate 38 coordinates Mg(2+). Histidine 153 is a Mg(2+) binding site.

It belongs to the DHBP synthase family. Homodimer. The cofactor is Mg(2+). It depends on Mn(2+) as a cofactor.

It carries out the reaction D-ribulose 5-phosphate = (2S)-2-hydroxy-3-oxobutyl phosphate + formate + H(+). Its pathway is cofactor biosynthesis; riboflavin biosynthesis; 2-hydroxy-3-oxobutyl phosphate from D-ribulose 5-phosphate: step 1/1. Functionally, catalyzes the conversion of D-ribulose 5-phosphate to formate and 3,4-dihydroxy-2-butanone 4-phosphate. In Shewanella putrefaciens (strain CN-32 / ATCC BAA-453), this protein is 3,4-dihydroxy-2-butanone 4-phosphate synthase.